We begin with the raw amino-acid sequence, 70 residues long: Sporulation protein YhaL (70 aa).

A helical transmembrane segment spans residues 3–23; sequence FFPWWVYLCIVGIIFSAYKLV. Positions 48-70 are disordered; the sequence is MEKERERRSSQQHEEENQNHSIA.

It localises to the cell membrane. In terms of biological role, required for efficient sporulation. The polypeptide is Sporulation protein YhaL (yhaL) (Bacillus subtilis (strain 168)).